Reading from the N-terminus, the 819-residue chain is Probable cadmium/zinc-transporting ATPase HMA1, chloroplastic (819 aa).

The N-terminal 17 residues, 1–17 (MEPATLTRSSSLTRFPY), are a transit peptide targeting the chloroplast. The Stromal portion of the chain corresponds to 18-122 (RRGLSTLRLA…IGWVRLANYL (105 aa)). Residues 66 to 79 (DHHHDHHHDDEQDH) show a composition bias toward basic and acidic residues. Residues 66 to 87 (DHHHDHHHDDEQDHHNHHHHHH) form a disordered region. A helical membrane pass occupies residues 123-144 (REHLHLCCSAAAMFLAAAVCPY). Residues 145 to 153 (LAPEPYIKS) are Lumenal-facing. A helical transmembrane segment spans residues 154 to 173 (LQNAFMIVGFPLVGVSASLD). The Stromal segment spans residues 174–180 (ALMDIAG). The helical transmembrane segment at 181-201 (GKVNIHVLMALAAFASVFMGN) threads the bilayer. Residue A202 is a topological domain, lumenal. The chain crosses the membrane as a helical span at residues 203–223 (LEGGLLLAMFNLAHIAEEFFT). Residues 224–361 (SRSMVDVKEL…KPKLQRWLDE (138 aa)) are Stromal-facing. Residues 362-384 (FGENYSKVVVVLSLAIAFLGPFL) traverse the membrane as a helical segment. Residues 385-398 (FKWPFLSTAACRGS) lie on the Lumenal side of the membrane. The chain crosses the membrane as a helical span at residues 399 to 416 (VYRALGLMVAASPCALAV). The Stromal portion of the chain corresponds to 417–737 (APLAYATAIS…AKSRQTTSLV (321 aa)). D453 acts as the 4-aspartylphosphate intermediate in catalysis. Mg(2+) contacts are provided by E682 and D686. Residues 738–757 (KQNVALALTSIFLAALPSVL) traverse the membrane as a helical segment. Residues 758 to 762 (GFVPL) are Lumenal-facing. The chain crosses the membrane as a helical span at residues 763–781 (WLTVLLHEGGTLLVCLNSV). Topologically, residues 782 to 819 (RGLNDPSWSWKQDIVHLINKLRSQEPTSSSSNSLSSAH) are stromal.

The protein belongs to the cation transport ATPase (P-type) (TC 3.A.3) family. Type IB subfamily.

Its subcellular location is the plastid. It localises to the chloroplast inner membrane. It catalyses the reaction Zn(2+)(in) + ATP + H2O = Zn(2+)(out) + ADP + phosphate + H(+). The catalysed reaction is Cd(2+)(in) + ATP + H2O = Cd(2+)(out) + ADP + phosphate + H(+). Its function is as follows. Involved in cadmium/zinc transport. In Arabidopsis thaliana (Mouse-ear cress), this protein is Probable cadmium/zinc-transporting ATPase HMA1, chloroplastic (HMA1).